Reading from the N-terminus, the 1277-residue chain is MGAHHPALGLLLLLLCPAQVFSQSCVWYGECGIATGDKRYNCKYSGPPKPLPKDGYDLVQELCPGLFFDNVSLCCDIQQLQTLKSNLQLPLQFLSRCPSCFYNLMTLFCELTCSPHQSQFLNVTATEDYFDPKTQENKTNVKELEYFVGQSFANAMYNACRDVEAPSSNEKALGLLCGRDARACNATNWIEYMFNKDNGQAPFTIIPVFSDLSILGMEPMRNATKGCNESVDEVTGPCSCQDCSIVCGPKPQPPPPPMPWRIWGLDAMYVIMWVTYVAFLFVFFGALLAVWCHRRRYFVSEYTPIDSNIAFSVNSSDKGEASCCDPLGAAFDDCLRRMFTKWGAFCVRNPTCIIFFSLAFITVCSSGLVFVQVTTNPVELWSAPHSQARLEKEYFDKHFGPFFRTEQLIIQAPNTSVHIYEPYPAGADVPFGPPLNKEILHQVLDLQIAIESITASYNNETVTLQDICVAPLSPYNKNCTIMSVLNYFQNSHAVLDSQVGDDFYIYADYHTHFLYCVRAPASLNDTSLLHGPCLGTFGGPVFPWLVLGGYDDQNYNNATALVITFPVNNYYNDTERLQRAWAWEKEFISFVKNYKNPNLTISFTAERSIEDELNRESNSDVFTVIISYVVMFLYISLALGHIQSCSRLLVDSKISLGIAGILIVLSSVACSLGIFSYMGMPLTLIVIEVIPFLVLAVGVDNIFILVQTYQRDERLQEETLDQQLGRILGEVAPTMFLSSFSETSAFFFGALSSMPAVHTFSLFAGMAVLIDFLLQITCFVSLLGLDIKRQEKNHLDILCCVRGADDGQGSHASESYLFRFFKNYFAPLLLKDWLRPIVVAVFVGVLSFSVAVVNKVDIGLDQSLSMPNDSYVIDYFKSLAQYLHSGPPVYFVLEEGYNYSSRKGQNMVCGGMGCDNDSLVQQIFNAAELDTYTRVGFAPSSWIDDYFDWVSPQSSCCRLYNVTHQFCNASVMDPTCVRCRPLTPEGKQRPQGKEFMKFLPMFLSDNPNPKCGKGGHAAYGSAVNIVGDDTYIGATYFMTYHTILKTSADYTDAMKKARLIASNITETMRSKGSDYRVFPYSVFYVFYEQYLTIIDDTIFNLSVSLGSIFLVTLVVLGCELWSAVIMCITIAMILVNMFGVMWLWGISLNAVSLVNLVMSCGISVEFCSHITRAFTMSTKGSRVSRAEEALAHMGSSVFSGITLTKFGGIVVLAFAKSQIFEIFYFRMYLAMVLLGATHGLIFLPVLLSYIGPSVNKAKRHTTYERYRGTERERLLNF.

Residues Met-1–Ser-22 form the signal peptide. The Lumenal segment spans residues Gln-23–Tyr-269. 9 disulfide bridges follow: Cys-25/Cys-74, Cys-31/Cys-42, Cys-63/Cys-109, Cys-75/Cys-113, Cys-97/Cys-238, Cys-100/Cys-160, Cys-177/Cys-184, Cys-227/Cys-243, and Cys-240/Cys-247. Residue Asn-41 participates in cholesterol binding. The N-linked (GlcNAc...) asparagine glycan is linked to Asn-70. Gln-79 contributes to the cholesterol binding site. N-linked (GlcNAc...) asparagine glycans are attached at residues Asn-122 and Asn-137. An important for cholesterol binding and cholesterol transfer from NPC1 to liposomes region spans residues Leu-175–Ile-205. N-linked (GlcNAc...) asparagine glycosylation is found at Asn-185, Asn-222, and Asn-228. A helical transmembrane segment spans residues Val-270–Val-290. At Trp-291–Pro-350 the chain is on the cytoplasmic side. A helical membrane pass occupies residues Thr-351–Val-371. Over Gln-372–Val-621 the chain is Lumenal. N-linked (GlcNAc...) asparagine glycosylation is found at Asn-414, Asn-459, Asn-478, and Asn-524. Cystine bridges form between Cys-468–Cys-479 and Cys-516–Cys-533. The 166-residue stretch at Asp-620–Leu-785 folds into the SSD domain. A helical transmembrane segment spans residues Phe-622 to Ile-642. Residues Gln-643–Lys-653 are Cytoplasmic-facing. Residues Ile-654–Ile-674 traverse the membrane as a helical segment. The Lumenal portion of the chain corresponds to Phe-675–Thr-683. Residues Leu-684–Ile-704 traverse the membrane as a helical segment. Residues Leu-705–Glu-730 are Cytoplasmic-facing. A helical membrane pass occupies residues Val-731–Leu-751. The Lumenal segment spans residues Ser-752–Thr-759. A helical membrane pass occupies residues Phe-760–Val-780. At Ser-781–Asp-832 the chain is on the cytoplasmic side. A helical transmembrane segment spans residues Trp-833–Val-853. Residues Asn-854–Thr-1097 are Lumenal-facing. Residues Asn-868 and Asn-898 are each glycosylated (N-linked (GlcNAc...) asparagine). Cys-909 and Cys-914 are disulfide-bonded. N-linked (GlcNAc...) asparagine glycosylation is found at Asn-916, Asn-961, Asn-968, and Asn-1063. 3 disulfides stabilise this stretch: Cys-956-Cys-1011, Cys-957-Cys-979, and Cys-967-Cys-976. Residues Ile-1098–Cys-1118 form a helical membrane-spanning segment. The Cytoplasmic segment spans residues Glu-1119 to Ala-1123. A helical membrane pass occupies residues Val-1124–Trp-1144. Gly-1145 is a topological domain (lumenal). A helical transmembrane segment spans residues Ile-1146–Phe-1166. Topologically, residues Cys-1167 to Gly-1194 are cytoplasmic. Residues Ser-1195–Ala-1215 traverse the membrane as a helical segment. Residues Lys-1216 to Arg-1226 are Lumenal-facing. The chain crosses the membrane as a helical span at residues Met-1227–Leu-1247. Residues Ser-1248 to Phe-1277 are Cytoplasmic-facing. The tract at residues Leu-1274–Phe-1277 is required for location in lysosomes. Positions Leu-1274 to Phe-1277 match the Di-leucine motif motif.

This sequence belongs to the patched family. As to quaternary structure, interacts (via the second lumenal domain) with NPC2. Interacts with TMEM97; the interaction may decrease NPC1 availability to the cell. Interacts with TIM1. Interacts with SLC38A9; this interaction inhibits cholesterol-mediated mTORC1 activation via its sterol transport activity. N-glycosylated. In terms of tissue distribution, detected in liver (at protein level). Ubiquitous. Detected in adult heart, spleen, lung, liver, skeletal muscle, kidney, testis.

Its subcellular location is the late endosome membrane. The protein localises to the lysosome membrane. The catalysed reaction is cholesterol(in) = cholesterol(out). Functionally, intracellular cholesterol transporter which acts in concert with NPC2 and plays an important role in the egress of cholesterol from the endosomal/lysosomal compartment. Unesterified cholesterol that has been released from LDLs in the lumen of the late endosomes/lysosomes is transferred by NPC2 to the cholesterol-binding pocket in the N-terminal domain of NPC1. Cholesterol binds to NPC1 with the hydroxyl group buried in the binding pocket. May play a role in vesicular trafficking in glia, a process that may be crucial for maintaining the structural and functional integrity of nerve terminals. Inhibits cholesterol-mediated mTORC1 activation throught its interaction with SLC38A9. The chain is NPC intracellular cholesterol transporter 1 from Mus musculus (Mouse).